A 123-amino-acid chain; its full sequence is Large ribosomal subunit protein bL12 (123 aa).

It belongs to the bacterial ribosomal protein bL12 family. In terms of assembly, homodimer. Part of the ribosomal stalk of the 50S ribosomal subunit. Forms a multimeric L10(L12)X complex, where L10 forms an elongated spine to which 2 to 4 L12 dimers bind in a sequential fashion. Binds GTP-bound translation factors.

Its function is as follows. Forms part of the ribosomal stalk which helps the ribosome interact with GTP-bound translation factors. Is thus essential for accurate translation. The sequence is that of Large ribosomal subunit protein bL12 from Borrelia turicatae (strain 91E135).